Here is a 482-residue protein sequence, read N- to C-terminus: tRNA sulfurtransferase (482 aa).

One can recognise a THUMP domain in the interval 61–165; the sequence is PVIADALTRI…NDKLMLVKAR (105 aa). ATP-binding positions include 183–184, Lys-265, Gly-287, and Gln-296; that span reads LI. An intrachain disulfide couples Cys-344 to Cys-456. The 79-residue stretch at 404 to 482 folds into the Rhodanese domain; the sequence is FDADQVILDI…GFTNVKVYRP (79 aa). The active-site Cysteine persulfide intermediate is Cys-456.

It belongs to the ThiI family.

The protein resides in the cytoplasm. The enzyme catalyses [ThiI sulfur-carrier protein]-S-sulfanyl-L-cysteine + a uridine in tRNA + 2 reduced [2Fe-2S]-[ferredoxin] + ATP + H(+) = [ThiI sulfur-carrier protein]-L-cysteine + a 4-thiouridine in tRNA + 2 oxidized [2Fe-2S]-[ferredoxin] + AMP + diphosphate. The catalysed reaction is [ThiS sulfur-carrier protein]-C-terminal Gly-Gly-AMP + S-sulfanyl-L-cysteinyl-[cysteine desulfurase] + AH2 = [ThiS sulfur-carrier protein]-C-terminal-Gly-aminoethanethioate + L-cysteinyl-[cysteine desulfurase] + A + AMP + 2 H(+). Its pathway is cofactor biosynthesis; thiamine diphosphate biosynthesis. Its function is as follows. Catalyzes the ATP-dependent transfer of a sulfur to tRNA to produce 4-thiouridine in position 8 of tRNAs, which functions as a near-UV photosensor. Also catalyzes the transfer of sulfur to the sulfur carrier protein ThiS, forming ThiS-thiocarboxylate. This is a step in the synthesis of thiazole, in the thiamine biosynthesis pathway. The sulfur is donated as persulfide by IscS. The protein is tRNA sulfurtransferase of Serratia proteamaculans (strain 568).